A 551-amino-acid polypeptide reads, in one-letter code: Alkaline/neutral invertase CINV1 (551 aa).

N-acetylmethionine is present on Met1. Residues Ser11, Ser14, Ser44, and Ser61 each carry the phosphoserine modification. Residues 50–74 (TGYSRHDGIHDSPRGRSVLDTPLSS) form a disordered region. Residues 53–63 (SRHDGIHDSPR) are compositionally biased toward basic and acidic residues. Thr70 is subject to Phosphothreonine. The residue at position 547 (Ser547) is a Phosphoserine.

It belongs to the glycosyl hydrolase 100 family. As to quaternary structure, forms homohexamers. Interacts with PIP5K9. Interaction with PIP5K9 represses CINV1 activity. Interacts with GRF1, GRF2, GRF3, GRF4, GRF5, GRF6, GRF7, GRF8 and GRF10; these interactions are dependent of the phosphorylation at Ser-547. Post-translationally, phosphorylated at Ser-547 by CPK3 and CPK21. As to expression, expressed in radicle, hypocotyls, root tips and vascular cylinder, leaf vasculature, shoot stipules, trichomes, stem, stigma apex and base of siliques.

The protein localises to the cytoplasm. Its subcellular location is the cytosol. It is found in the nucleus. It carries out the reaction Hydrolysis of terminal non-reducing beta-D-fructofuranoside residues in beta-D-fructofuranosides.. Functionally, cytosolic invertase that specifically cleaves sucrose into glucose and fructose and is involved in the regulation of multiple tissue development including primary root elongation, root hair growth, leaf and silique development, and floral transition. Is involved in osmotic stress-induced inhibition on lateral root growth by controlling the concentration of hexose in cells. May regulate sugar-mediated root development by controlling sucrose catabolism in root cells. Contributes to carbon partitioning and cellulose biosynthesis in seedlings. In Arabidopsis thaliana (Mouse-ear cress), this protein is Alkaline/neutral invertase CINV1.